Here is a 547-residue protein sequence, read N- to C-terminus: Chaperonin GroEL (547 aa).

Residues 30–33 (TLGP), K51, 87–91 (DGTTT), G415, and D495 each bind ATP.

This sequence belongs to the chaperonin (HSP60) family. Forms a cylinder of 14 subunits composed of two heptameric rings stacked back-to-back. Interacts with the co-chaperonin GroES.

Its subcellular location is the cytoplasm. The catalysed reaction is ATP + H2O + a folded polypeptide = ADP + phosphate + an unfolded polypeptide.. Its function is as follows. Together with its co-chaperonin GroES, plays an essential role in assisting protein folding. The GroEL-GroES system forms a nano-cage that allows encapsulation of the non-native substrate proteins and provides a physical environment optimized to promote and accelerate protein folding. This Thiobacillus denitrificans (strain ATCC 25259 / T1) protein is Chaperonin GroEL.